The following is a 382-amino-acid chain: Manganese peroxidase H4 (382 aa).

A signal peptide spans 1–24; sequence MAFGSLLAFVALAAITRAAPTAES. Cystine bridges form between Cys27/Cys39, Cys38/Cys313, Cys57/Cys141, Cys277/Cys344, and Cys366/Cys373. Mn(2+) is bound by residues Glu59 and Glu63. The active-site Proton acceptor is His70. 4 residues coordinate Ca(2+): Asp71, Gly86, Asp88, and Ser90. Residues Asn100 and Asn155 are each glycosylated (N-linked (GlcNAc...) asparagine). His197 is a binding site for heme b. Position 198 (Thr198) interacts with Ca(2+). Residue Asp203 participates in Mn(2+) binding. Residues Asp215, Thr217, Thr220, and Asp222 each contribute to the Ca(2+) site. N-linked (GlcNAc...) asparagine glycosylation is present at Asn241.

This sequence belongs to the peroxidase family. Ligninase subfamily. The cofactor is heme b. Ca(2+) serves as cofactor.

The protein localises to the secreted. The enzyme catalyses 2 Mn(2+) + H2O2 + 2 H(+) = 2 Mn(3+) + 2 H2O. Catalyzes the oxidation of Mn(2+) to Mn(3+). The latter, acting as a diffusible redox mediator, is capable of oxidizing a variety of lignin compounds. This is Manganese peroxidase H4 from Phanerodontia chrysosporium (White-rot fungus).